We begin with the raw amino-acid sequence, 212 residues long: Ribosomal RNA small subunit methyltransferase G (212 aa).

Residues G73, 127–128, and R143 each bind S-adenosyl-L-methionine; that span reads IE.

It belongs to the methyltransferase superfamily. RNA methyltransferase RsmG family.

The protein localises to the cytoplasm. It carries out the reaction guanosine(527) in 16S rRNA + S-adenosyl-L-methionine = N(7)-methylguanosine(527) in 16S rRNA + S-adenosyl-L-homocysteine. In terms of biological role, specifically methylates the N7 position of guanine in position 527 of 16S rRNA. The protein is Ribosomal RNA small subunit methyltransferase G of Methylobacterium sp. (strain 4-46).